The primary structure comprises 213 residues: LexA repressor (213 aa).

A DNA-binding region (H-T-H motif) is located at residues 29–49 (RAEIAQALGFRSPNAAEDHLK). Residues Ser-131 and Lys-168 each act as for autocatalytic cleavage activity in the active site.

Belongs to the peptidase S24 family. As to quaternary structure, homodimer.

The enzyme catalyses Hydrolysis of Ala-|-Gly bond in repressor LexA.. Represses a number of genes involved in the response to DNA damage (SOS response), including recA and lexA. In the presence of single-stranded DNA, RecA interacts with LexA causing an autocatalytic cleavage which disrupts the DNA-binding part of LexA, leading to derepression of the SOS regulon and eventually DNA repair. This chain is LexA repressor, found in Bordetella avium (strain 197N).